The sequence spans 465 residues: Branchpoint-bridging protein (465 aa).

The segment covering 1-11 has biased composition (basic and acidic residues); sequence MSERREEERGR. Positions 1 to 22 are disordered; sequence MSERREEERGRTGFSMKKNHNS. A KH domain is found at 139–205; sequence YIPVSQYPQI…DFSDPLHCLI (67 aa). 2 consecutive CCHC-type zinc fingers follow at residues 257–274 and 282–299; these read RPCATCGQQGHKKYECPH and IICRRCNQPGHTIRDCTS. Disordered stretches follow at residues 324–391 and 431–465; these read AVDQ…LSHQ and INDVSGPNGTLEAPPGLDLGNNDSNITLQGPPGLN. 2 stretches are compositionally biased toward polar residues: residues 339 to 361 and 377 to 391; these read RNHNGSSRFNDNSKYLNNGNKRA and QINPTSSSQDTLSHQ.

Belongs to the BBP/SF1 family.

It localises to the nucleus. Its function is as follows. Necessary for the splicing of pre-mRNA. Has a role in the recognition of the branch site (5'-UACUAAC-3'), the pyrimidine tract and the 3'-splice site at the 3'-end of introns. This is Branchpoint-bridging protein (BBP) from Candida glabrata (strain ATCC 2001 / BCRC 20586 / JCM 3761 / NBRC 0622 / NRRL Y-65 / CBS 138) (Yeast).